The following is a 115-amino-acid chain: Parathyroid hormone (115 aa).

Residues 1–25 (MMSAKDTVKVMVVMLAICFLARSDG) form the signal peptide. The propeptide occupies 26-31 (KPIKKR). The interval 51 to 69 (RVEWLRKKLQDVHNFVALG) is important for receptor binding. The tract at residues 75–98 (RDGGSQRPRKKEDNVLVESHQKSL) is disordered.

It belongs to the parathyroid hormone family. Interacts with PTH1R (via N-terminal extracellular domain).

It localises to the secreted. Its function is as follows. Parathyroid hormone elevates calcium level by dissolving the salts in bone and preventing their renal excretion. Acts by binding to its receptor, PTH1R, activating G protein-coupled receptor signaling. Stimulates [1-14C]-2-deoxy-D-glucose (2DG) transport and glycogen synthesis in osteoblastic cells. In Sus scrofa (Pig), this protein is Parathyroid hormone (PTH).